The primary structure comprises 350 residues: GTPase Obg (350 aa).

The region spanning 1–159 (MKFIDEAKIT…WELALELKVL (159 aa)) is the Obg domain. Positions 17-43 (GDGSASFRREKYIPKGGPDGGDGGRGG) are disordered. Positions 33 to 43 (GPDGGDGGRGG) are enriched in gly residues. The region spanning 160-334 (ADVGLLGMPN…LTYAVMDYLG (175 aa)) is the OBG-type G domain. GTP contacts are provided by residues 166-173 (GMPNAGKS), 191-195 (FTTLA), 213-216 (DIPG), 284-287 (NKLD), and 315-317 (SAL). Mg(2+) is bound by residues Ser-173 and Thr-193.

Belongs to the TRAFAC class OBG-HflX-like GTPase superfamily. OBG GTPase family. In terms of assembly, monomer. The cofactor is Mg(2+).

The protein resides in the cytoplasm. In terms of biological role, an essential GTPase which binds GTP, GDP and possibly (p)ppGpp with moderate affinity, with high nucleotide exchange rates and a fairly low GTP hydrolysis rate. Plays a role in control of the cell cycle, stress response, ribosome biogenesis and in those bacteria that undergo differentiation, in morphogenesis control. This Thiobacillus denitrificans (strain ATCC 25259 / T1) protein is GTPase Obg.